The primary structure comprises 135 residues: Hydroxylaminobenzene mutase HabA (135 aa).

A run of 4 helical transmembrane segments spans residues leucine 5 to valine 25, valine 33 to tyrosine 55, phenylalanine 67 to tryptophan 87, and phenylalanine 113 to isoleucine 133.

Its subcellular location is the cell membrane. The enzyme catalyses N-phenylhydroxylamine = 2-aminophenol. In terms of biological role, catalyzes the rearrangement of hydroxylaminobenzene to 2-aminophenol. Involved in the degradation of nitrobenzene. The polypeptide is Hydroxylaminobenzene mutase HabA (habA) (Ectopseudomonas oleovorans (Pseudomonas oleovorans)).